A 560-amino-acid polypeptide reads, in one-letter code: Membrane protein insertase YidC (560 aa).

A helical membrane pass occupies residues 7–27 (ILIVALAIVSYVMVLKWNQDY). The segment at 43–72 (APAIPDTPLGNNASASADVPSANGETSAPL) is disordered. Transmembrane regions (helical) follow at residues 367 to 387 (IVGN…GIFF), 437 to 457 (LGGC…YWVL), 468 to 488 (FMLW…PIIM), and 515 to 535 (PIIF…YWVV).

It belongs to the OXA1/ALB3/YidC family. Type 1 subfamily. As to quaternary structure, interacts with the Sec translocase complex via SecD. Specifically interacts with transmembrane segments of nascent integral membrane proteins during membrane integration.

The protein localises to the cell inner membrane. Its function is as follows. Required for the insertion and/or proper folding and/or complex formation of integral membrane proteins into the membrane. Involved in integration of membrane proteins that insert both dependently and independently of the Sec translocase complex, as well as at least some lipoproteins. Aids folding of multispanning membrane proteins. This is Membrane protein insertase YidC from Pseudomonas fluorescens (strain SBW25).